A 229-amino-acid chain; its full sequence is PKHD-type hydroxylase OCAR_6723/OCA5_c13470 (229 aa).

The region spanning 78-180 is the Fe2OG dioxygenase domain; that stretch reads HIFPPLFNRY…RVASFFWLQS (103 aa). Residues H98, D100, and H161 each contribute to the Fe cation site. Residue R171 coordinates 2-oxoglutarate.

Requires Fe(2+) as cofactor. L-ascorbate serves as cofactor.

This is PKHD-type hydroxylase OCAR_6723/OCA5_c13470 from Afipia carboxidovorans (strain ATCC 49405 / DSM 1227 / KCTC 32145 / OM5) (Oligotropha carboxidovorans).